A 146-amino-acid chain; its full sequence is Hemoglobin subunit beta (146 aa).

Positions 2–146 (HWSAEEKQLI…VAHALARKYH (145 aa)) constitute a Globin domain. Heme b-binding residues include H63 and H92.

Belongs to the globin family. Heterotetramer of two alpha chains and two beta chains. Red blood cells.

In terms of biological role, involved in oxygen transport from the lung to the various peripheral tissues. The protein is Hemoglobin subunit beta (HBB) of Stercorarius maccormicki (South polar skua).